The sequence spans 293 residues: Glycine N-methyltransferase (293 aa).

Position 2 is an N-acetylvaline (valine 2). (6S)-5-methyl-5,6,7,8-tetrahydrofolate-binding residues include serine 4 and tyrosine 6. Serine 10 carries the phosphoserine modification. Residues tyrosine 22, tryptophan 31, tyrosine 34, and arginine 41 each contribute to the S-adenosyl-L-methionine site. Tyrosine 34 carries the phosphotyrosine modification. Lysine 46 bears the N6-succinyllysine mark. Residues alanine 65, 86–88, 117–118, leucine 137, 137–140, and arginine 176 each bind S-adenosyl-L-methionine; these read DAS, NW, and LGNS. 3 positions are modified to N6-succinyllysine: lysine 191, lysine 196, and lysine 201. Histidine 215 contributes to the (6S)-5-methyl-5,6,7,8-tetrahydrofolate binding site. Tyrosine 221 is a binding site for S-adenosyl-L-methionine. Arginine 240 is a binding site for (6S)-5-methyl-5,6,7,8-tetrahydrofolate.

The protein belongs to the class I-like SAM-binding methyltransferase superfamily. Glycine N-methyltransferase family. As to quaternary structure, homotetramer.

It localises to the cytoplasm. It catalyses the reaction glycine + S-adenosyl-L-methionine = sarcosine + S-adenosyl-L-homocysteine + H(+). With respect to regulation, inhibited by 5-methyltetrahydrofolate monoglutamate and by 5-methyltetrahydrofolate pentaglutamate, inhibition is much more effective by the pentaglutamate form than by the monoglutamate form. Two molecules of 5-methyltetrahydrofolate are bound per tetramer. The binding sites are localized between subunits. Inhibitor binding may preclude movements of the polypeptide chain that are necessary for enzyme activity. Functionally, catalyzes the methylation of glycine by using S-adenosylmethionine (AdoMet) to form N-methylglycine (sarcosine) with the concomitant production of S-adenosylhomocysteine (AdoHcy), a reaction regulated by the binding of 5-methyltetrahydrofolate. Plays an important role in the regulation of methyl group metabolism by regulating the ratio between S-adenosyl-L-methionine and S-adenosyl-L-homocysteine. This chain is Glycine N-methyltransferase (Gnmt), found in Mus musculus (Mouse).